We begin with the raw amino-acid sequence, 213 residues long: Golgi to ER traffic protein 1 (213 aa).

Residues 1 to 4 lie on the Lumenal side of the membrane; that stretch reads MESW. The helical transmembrane segment at 5–25 threads the bilayer; it reads LLVILAFLVLERLWPLIDSLI. At 26–98 the chain is on the cytoplasmic side; the sequence is QRFAQANSTK…RTKASLKKVK (73 aa). A coiled-coil region spans residues 55–99; sequence AQDQYVKWTKNNRTLEKINKQIEEEKKQLLSQVDRTKASLKKVKL. Residues 99 to 119 traverse the membrane as a helical segment; sequence LVLITVPFTILKFYKGKMPIY. Over 120–158 the chain is Lumenal; that stretch reads DLPKGLFPNYLQGLFQHGWVYLALGPLNIKKVGDGTHVT. A helical transmembrane segment spans residues 159–175; the sequence is VSLAIWLFALLKVVSTL. The Cytoplasmic segment spans residues 176 to 213; that stretch reads GNIWESLTAPAIPAPTITTDPIDQTNESEKPPVDQPVD. The interval 193 to 213 is disordered; it reads TTDPIDQTNESEKPPVDQPVD.

This sequence belongs to the WRB/GET1 family. Component of the Golgi to ER traffic (GET) complex, which is composed of GET1, GET2 and GET3. Within the complex, GET1 and GET2 form a heterotetramer which is stabilized by phosphatidylinositol binding and which binds to the GET3 homodimer.

It localises to the endoplasmic reticulum membrane. Its subcellular location is the golgi apparatus membrane. In terms of biological role, required for the post-translational delivery of tail-anchored (TA) proteins to the endoplasmic reticulum. Together with GET2, acts as a membrane receptor for soluble GET3, which recognizes and selectively binds the transmembrane domain of TA proteins in the cytosol. The GET complex cooperates with the HDEL receptor ERD2 to mediate the ATP-dependent retrieval of resident ER proteins that contain a C-terminal H-D-E-L retention signal from the Golgi to the ER. The polypeptide is Golgi to ER traffic protein 1 (Kluyveromyces lactis (strain ATCC 8585 / CBS 2359 / DSM 70799 / NBRC 1267 / NRRL Y-1140 / WM37) (Yeast)).